Consider the following 456-residue polypeptide: Glycerol-3-phosphate acyltransferase 4 (456 aa).

The signal sequence occupies residues 1–37 (MFLLLPFDSLIVNLLGISLTVLFTLLLVFIIVPAIFG). Helical transmembrane passes span 156–176 (ISLR…CFLL) and 180–200 (IALA…VGYL). A glycan (N-linked (GlcNAc...) asparagine) is linked at asparagine 247. Residues 248-253 (HTSPID) carry the HXXXXD motif motif. N-linked (GlcNAc...) asparagine glycans are attached at residues asparagine 327, asparagine 328, and asparagine 362.

Belongs to the 1-acyl-sn-glycerol-3-phosphate acyltransferase family.

Its subcellular location is the endoplasmic reticulum membrane. The enzyme catalyses sn-glycerol 3-phosphate + an acyl-CoA = a 1-acyl-sn-glycero-3-phosphate + CoA. The catalysed reaction is dodecanoyl-CoA + sn-glycerol 3-phosphate = 1-dodecanoyl-sn-glycerol 3-phosphate + CoA. It catalyses the reaction sn-glycerol 3-phosphate + hexadecanoyl-CoA = 1-hexadecanoyl-sn-glycero-3-phosphate + CoA. It carries out the reaction sn-glycerol 3-phosphate + octadecanoyl-CoA = 1-octadecanoyl-sn-glycero-3-phosphate + CoA. The enzyme catalyses sn-glycerol 3-phosphate + (9Z)-octadecenoyl-CoA = 1-(9Z-octadecenoyl)-sn-glycero-3-phosphate + CoA. The catalysed reaction is (9Z,12Z)-octadecadienoyl-CoA + sn-glycerol 3-phosphate = 1-(9Z,12Z)-octadecadienoyl-sn-glycero-3-phosphate + CoA. The protein operates within phospholipid metabolism; CDP-diacylglycerol biosynthesis; CDP-diacylglycerol from sn-glycerol 3-phosphate: step 1/3. Functionally, converts glycerol-3-phosphate to 1-acyl-sn-glycerol-3-phosphate (lysophosphatidic acid or LPA) by incorporating an acyl moiety at the sn-1 position of the glycerol backbone. Active against both saturated and unsaturated long-chain fatty acyl-CoAs. Protects cells against lipotoxicity. This chain is Glycerol-3-phosphate acyltransferase 4, found in Pongo abelii (Sumatran orangutan).